Here is a 364-residue protein sequence, read N- to C-terminus: MRTDLFDFHLPPENIALRPASPREAARMLVVQGDGVLRDRTIGDLPDWLEPGDQLVVNDTKVIAAQLSGRRISRETEAKIEATLIKRLDGSRWQALVRPAKKLLAGDTIRFGNEGKVCLLGHLDATVEAKGEEGEVTLSFVFHGPALDQAIADLGRPPLPPYIAGKRPADEQDAQDYQTMFAAKEGAVAAPTAGLHFTPALEQRLRARGVGLQRVTLHVGAGTFLPVKVEDTEGHRMHAEWGSLTPETAAALNQAKAEGGRIVAVGTTSMRLLESAALPDGTIAPFEAETSIFITPGYRFRAVDILMTNFHLPRSTLFMLVSAFAGLETMQAAYAHAIESGYRFYSYGDACLLFRQPDERVVEP.

It belongs to the QueA family. Monomer.

Its subcellular location is the cytoplasm. It carries out the reaction 7-aminomethyl-7-carbaguanosine(34) in tRNA + S-adenosyl-L-methionine = epoxyqueuosine(34) in tRNA + adenine + L-methionine + 2 H(+). Its pathway is tRNA modification; tRNA-queuosine biosynthesis. Its function is as follows. Transfers and isomerizes the ribose moiety from AdoMet to the 7-aminomethyl group of 7-deazaguanine (preQ1-tRNA) to give epoxyqueuosine (oQ-tRNA). The chain is S-adenosylmethionine:tRNA ribosyltransferase-isomerase from Bradyrhizobium sp. (strain ORS 278).